The following is a 697-amino-acid chain: Probable translocation protein y4yR (697 aa).

8 helical membrane-spanning segments follow: residues 20–40 (VALM…VMAV), 42–62 (ALIG…LYVS), 67–87 (FSSL…LTVA), 107–127 (SFVI…VTMV), 200–220 (SIAG…IGLL), 235–255 (LLTI…SITA), 293–313 (VAMG…AAVF), and 372–392 (IARI…PIPV). The interval 675 to 697 (IRLPPSNGTSGEPRSIRPSATTG) is disordered. The segment covering 680-697 (SNGTSGEPRSIRPSATTG) has biased composition (polar residues).

It belongs to the FHIPEP (flagella/HR/invasion proteins export pore) family.

Its subcellular location is the cell inner membrane. Could be involved in the secretion of an unknown factor. The chain is Probable translocation protein y4yR from Sinorhizobium fredii (strain NBRC 101917 / NGR234).